The primary structure comprises 1054 residues: MDRRSWPWKKKASDKSILVIDSAADASHSQIDKEAIKKPKYVQISVEQYTHFTGLEEQIKSYDVQIKGYDVQVKTYENQVESYEEQVKDFEEQIDAYDEKVHEYEEQVQKLNEDVEDLNEKLSVANEEIVTKEALVKQHSKVAEDAVSGWEKADAEALALKNTLESVTLSKLTAEDRAAHLDGALKECMRQIRNLKKDHEVKLHDVALSKTKQIEKMTMEFEKRMCDYEQELLRSAADSDALSRTLQERSNMLVKVSEEKSRADAEIETLKSNLEMCEREIKSLKYEVHVVSKELEIRNEEKNMCIRSAESANKQHLEGVKKIAKLEAECQRLRSLVRKKLPGPAALAQMKLEVENLGRDSGDARQKRSPVKVSSPCKSPGGYSSTGSEFSLDNAQKFQKENEFLTERLLAMEEETKMLKEALAKRNSELLESRNLCAQSTSKLQSLEAQLQQNNSQKSSLEVCPNLNTSNPSSSISVSEDGNDDSGSCSGSLSTNPSQQIKKEKDMAALERVESVNSHVELMDDFLEMEKLACLPNLSSSNGSIDSKDGSGDQKSEMVILDAHTDLEDSDRGSPAVMKFRSRLSKVLESVSPDADIQKIVGDIKCILQDVNACMDQEKPSEVHVHPEEVSDLCPEQNLVEDCHLAEQKLQSIHQDLKNAVSRIHDFVLLLRNEVKAGQDTSIEGNDFVELIEGFSVTFNHVLSGDKSLDDFVSNLANVFNEAMERKVSFRGLASSEVETLSPDCIDKVALPESKVVDKDSSQEIYQNGCVHNEPGVPCDENRVSGYESDSKLQEIEELRSEKEKMAVDIEGLKCQLQESEQLLADIRSQFDSAQRSNRLADTQLRCMTESYRSLESRAADLEIDVNQLKEKIQKLENELEDEKCNHQEAILRCHELEEHIQRHRNTSLVAEDDEEADIKSKQERELSAAAEKLAECQETIFVLGKQLKSFRPQPEQMRSPQTRNESYSEEEELGTTTTSVPKNYAVVDEGDSVNEVPRFMESPKCPSDSETSDTTTSPSRVGSRLSRSGSSTNATPEKASRGISRFFSSKSGY.

Coiled coils occupy residues 64-139, 174-200, and 250-341; these read VQIK…VKQH, AEDR…KDHE, and SNML…RKKL. Disordered stretches follow at residues 359–390 and 448–506; these read RDSG…GSEF and EAQL…KEKD. Low complexity-rich tracts occupy residues 371 to 380, 450 to 461, and 470 to 494; these read VKVSSPCKSP, QLQQNNSQKSSL, and SNPS…GSLS. A coiled-coil region spans residues 389-463; the sequence is EFSLDNAQKF…NNSQKSSLEV (75 aa). Coiled-coil stretches lie at residues 637 to 666 and 788 to 944; these read QNLV…RIHD and ESDS…IFVL. The disordered stretch occupies residues 951 to 1054; it reads FRPQPEQMRS…SRFFSSKSGY (104 aa). Low complexity predominate over residues 1007–1032; it reads PSDSETSDTTTSPSRVGSRLSRSGSS.

Belongs to the FPP family. In terms of assembly, interacts with WPP/MAF proteins.

The polypeptide is Filament-like plant protein 6 (FPP6) (Arabidopsis thaliana (Mouse-ear cress)).